The primary structure comprises 352 residues: Protein-glutamate methylesterase/protein-glutamine glutaminase 2 (352 aa).

Residues methionine 1–glutamate 116 form the Response regulatory domain. Aspartate 50 carries the 4-aspartylphosphate modification. Residues alanine 162–glutamine 352 enclose the CheB-type methylesterase domain. Residues serine 174, histidine 200, and aspartate 296 contribute to the active site.

Belongs to the CheB family. Phosphorylated by CheA. Phosphorylation of the N-terminal regulatory domain activates the methylesterase activity.

Its subcellular location is the cytoplasm. It carries out the reaction [protein]-L-glutamate 5-O-methyl ester + H2O = L-glutamyl-[protein] + methanol + H(+). The enzyme catalyses L-glutaminyl-[protein] + H2O = L-glutamyl-[protein] + NH4(+). In terms of biological role, involved in chemotaxis. Part of a chemotaxis signal transduction system that modulates chemotaxis in response to various stimuli. Catalyzes the demethylation of specific methylglutamate residues introduced into the chemoreceptors (methyl-accepting chemotaxis proteins or MCP) by CheR. Also mediates the irreversible deamidation of specific glutamine residues to glutamic acid. The chain is Protein-glutamate methylesterase/protein-glutamine glutaminase 2 from Xanthomonas axonopodis pv. citri (strain 306).